A 266-amino-acid chain; its full sequence is Apolipoprotein A-I (266 aa).

Residues 1 to 18 (MKAVVLTLAVLFLTGSQA) form the signal peptide. A run of 2 repeats spans residues 67 to 88 (LKLLDNWDSLSSTVAKLREQIG) and 89 to 110 (PVTQEFWDNLEKETEVLRQEMS). Residues 67–266 (LKLLDNWDSL…DEATKKLNSQ (200 aa)) are 10 X approximate tandem repeats. Methionine 109 is subject to Methionine sulfoxide. One copy of the 3; half-length repeat lies at 111–121 (KDLEEVKKKVQ). 5 repeat units span residues 122 to 143 (PYLDEFQSKWHEEVELYRQKVA), 144 to 165 (PLGAELREGARQKLQELQEKLS), 166 to 187 (PLAEELRDRARAHVDALRAQLA), 188 to 209 (PYSEQLRERLAARLQALKEGGG), and 210 to 231 (AALTEYHAKASEHLSALREKAK). The stretch at 232 to 242 (PALEDLRQGLL) is one 9; half-length repeat. Copy 10 of the repeat occupies 243-266 (PVLENFRVSLLAAVDEATKKLNSQ).

Belongs to the apolipoprotein A1/A4/E family. Homodimer. Interacts with APOA1BP and CLU. Component of a sperm activating protein complex (SPAP), consisting of APOA1, an immunoglobulin heavy chain, an immunoglobulin light chain and albumin. Interacts with NDRG1. Interacts with SCGB3A2. Interacts with NAXE and YJEFN3. Glycosylated. In terms of processing, palmitoylated. Post-translationally, phosphorylation sites are present in the extracellular medium.

The protein resides in the secreted. Its function is as follows. Participates in the reverse transport of cholesterol from tissues to the liver for excretion by promoting cholesterol efflux from tissues and by acting as a cofactor for the lecithin cholesterol acyltransferase (LCAT). As part of the SPAP complex, activates spermatozoa motility. The sequence is that of Apolipoprotein A-I (APOA1) from Mirounga angustirostris (Northern elephant seal).